We begin with the raw amino-acid sequence, 464 residues long: Arabinose-proton symporter (464 aa).

Transmembrane regions (helical) follow at residues 21–43, 63–85, 92–111, 116–138, 150–172, 185–207, 266–288, 303–325, 332–354, 364–386, 398–420, and 424–446; these read GFVI…DTAV, GLVI…FLSD, ILMT…ALSQ, LIIA…VTYI, LSSL…NLAV, GWRW…LLVV, ALVI…ITYY, GFVT…VLLI, KLMS…SFYF, VLIL…IMIS, AGIA…PMMI, and GLAY…VVTI.

The protein belongs to the major facilitator superfamily. Sugar transporter (TC 2.A.1.1) family.

The protein localises to the cell membrane. The catalysed reaction is L-arabinose(in) + H(+)(in) = L-arabinose(out) + H(+)(out). It catalyses the reaction D-galactose(in) + H(+)(in) = D-galactose(out) + H(+)(out). It carries out the reaction D-xylose(in) + H(+)(in) = D-xylose(out) + H(+)(out). Its function is as follows. Uptake of L-arabinose across the cytoplasmic membrane with the concomitant transport of protons into the cell (symport system). In the presence of inducing amounts of L-arabinose, can import both D-galactose and D-xylose. Can also transport the disaccharide alpha-1,5-arabinobiose. The polypeptide is Arabinose-proton symporter (araE) (Bacillus subtilis (strain 168)).